A 455-amino-acid chain; its full sequence is Rhodopsin (455 aa).

Residues 1-34 (MVESTTLVNQTWWYNPTVDIHPHWAKFDPIPDAV) lie on the Extracellular side of the membrane. N9 carries an N-linked (GlcNAc...) asparagine glycan. The chain crosses the membrane as a helical span at residues 35-59 (YYSVGIFIGVVGIIGILGNGVVIYL). Residues 60–71 (FSKTKSLQTPAN) lie on the Cytoplasmic side of the membrane. The chain crosses the membrane as a helical span at residues 72–98 (MFIINLAMSDLSFSAINGFPLKTISAF). Residues 99 to 110 (MKKWIFGKVACQ) are Extracellular-facing. C109 and C187 are disulfide-bonded. A helical transmembrane segment spans residues 111-132 (LYGLLGGIFGFMSINTMAMISI). The short motif at 133-135 (DRY) is the 'Ionic lock' involved in activated form stabilization element. Topologically, residues 133–152 (DRYNVIGRPMAASKKMSHRR) are cytoplasmic. The helical transmembrane segment at 153–173 (AFLMIIFVWMWSIVWSVGPVF) threads the bilayer. Topologically, residues 174–200 (NWGAYVPEGILTSCSFDYLSTDPSTRS) are extracellular. A helical membrane pass occupies residues 201–225 (FILCMYFCGFMLPIIIIAFCYFNIV). The Cytoplasmic portion of the chain corresponds to 226–262 (MSVSNHEKEMAAMAKRLNAKELRKAQAGASAEMKLAK). The chain crosses the membrane as a helical span at residues 263-284 (ISMVIITQFMLSWSPYAIIALL). Residues 285–294 (AQFGPAEWVT) are Extracellular-facing. The helical transmembrane segment at 295 to 316 (PYAAELPVLFAKASAIHNPIVY) threads the bilayer. At K306 the chain carries N6-(retinylidene)lysine. Residues 317–455 (SVSHPKFREA…QGVDNQAYQA (139 aa)) are Cytoplasmic-facing. S-palmitoyl cysteine attachment occurs at residues C337 and C338. Over residues 378–387 (QKMQAQQAAY) the composition is skewed to low complexity. The interval 378 to 455 (QKMQAQQAAY…QGVDNQAYQA (78 aa)) is disordered. Residues 388–433 (QPPPPPQGYPPQGYPPQGAYPPPQGYPPQGYPPQGYPPQGYPPQGA) show a composition bias toward pro residues. Tandem repeats lie at residues 395–399 (GYPPQ), 400–404 (GYPPQ), 412–416 (GYPPQ), 417–421 (GYPPQ), 422–426 (GYPPQ), and 427–431 (GYPPQ). The segment at 395 to 431 (GYPPQGYPPQGAYPPPQGYPPQGYPPQGYPPQGYPPQ) is 6 X 5 AA repeats of G-Y-P-P-Q.

Belongs to the G-protein coupled receptor 1 family. Opsin subfamily. In terms of processing, contains one covalently linked retinal chromophore. Upon light absorption, the covalently bound 11-cis-retinal is converted to all-trans-retinal. After hydrolysis of the Schiff base and release of the covalently bound all-trans-retinal, active rhodopsin is regenerated by binding of a fresh molecule of 11-cis-retinal.

The protein localises to the cell projection. Its subcellular location is the rhabdomere membrane. Functionally, photoreceptor required for image-forming vision at low light intensity. Light-induced isomerization of 11-cis to all-trans retinal triggers a conformational change that activates signaling via G-proteins. Signaling mediates the activation of phospholipase C. Subsequent receptor phosphorylation mediates displacement of the bound G-protein alpha subunit by arrestin and terminates signaling. The chain is Rhodopsin (RHO) from Enteroctopus dofleini (North Pacific giant octopus).